A 203-amino-acid polypeptide reads, in one-letter code: Peptide deformylase (203 aa).

Residues cysteine 130 and histidine 173 each coordinate Fe cation. The active site involves glutamate 174. Histidine 177 lines the Fe cation pocket.

This sequence belongs to the polypeptide deformylase family. It depends on Fe(2+) as a cofactor.

The enzyme catalyses N-terminal N-formyl-L-methionyl-[peptide] + H2O = N-terminal L-methionyl-[peptide] + formate. In terms of biological role, removes the formyl group from the N-terminal Met of newly synthesized proteins. Requires at least a dipeptide for an efficient rate of reaction. N-terminal L-methionine is a prerequisite for activity but the enzyme has broad specificity at other positions. The chain is Peptide deformylase from Streptococcus pneumoniae serotype 4 (strain ATCC BAA-334 / TIGR4).